The primary structure comprises 368 residues: Ferredoxin--NADP reductase 2 (368 aa).

Residues aspartate 57, glutamine 65, tyrosine 70, valine 110, phenylalanine 145, aspartate 310, and threonine 351 each coordinate FAD.

This sequence belongs to the ferredoxin--NADP reductase type 2 family. As to quaternary structure, homodimer. It depends on FAD as a cofactor.

The catalysed reaction is 2 reduced [2Fe-2S]-[ferredoxin] + NADP(+) + H(+) = 2 oxidized [2Fe-2S]-[ferredoxin] + NADPH. In Cupriavidus pinatubonensis (strain JMP 134 / LMG 1197) (Cupriavidus necator (strain JMP 134)), this protein is Ferredoxin--NADP reductase 2.